The primary structure comprises 145 residues: Basic leucine zipper 1 (145 aa).

A compositionally biased stretch (polar residues) spans 1–11 (MANAEKTSSGS). The tract at residues 1-39 (MANAEKTSSGSDIDEKKRKRKLSNRESARRSRLKKQKLM) is disordered. The region spanning 14 to 77 (DEKKRKRKLS…DSVETENAGL (64 aa)) is the bZIP domain. The basic motif stretch occupies residues 16 to 37 (KKRKRKLSNRESARRSRLKKQK). Positions 46 to 53 (ISSLERRI) are leucine-zipper.

This sequence belongs to the bZIP family. In terms of assembly, interacts with ZFP7, BZIP4, BZIP9, BZIP10, BZIP11, BZIP25, BZIP42, BZIP44, BZIP53, BZIP58 and BZIP63. As to expression, expressed in both shoots, including young leaves, stipulae and trichomes (except in cotyledons and hypocotyl), and roots, including vascular tissues (e.g. in both the phloem and the xylem). Present in seeds and pollen. Restricted to vasculatures and roots in the presence of sucrose or glucose.

It localises to the nucleus. In terms of biological role, transcription factor that binds to the C-box-like motif (5'-TGCTGACGTCA-3') and G-box-like motif (5'-CCACGTGGCC-3'), ABRE elements, of gene promoters involved in sugar signaling. Activated by low energy stress both at transcriptional and post-transcriptional mechanisms. Promotes dark-induced senescence and participates in the transcriptional reprogramming of amino acid metabolism during the dark-induced starvation response. Transcription activator of the mannan synthase CSLA9. Recognizes and binds to DNA-specific sequence of CSLA9 promoter. The protein is Basic leucine zipper 1 (BZIP1) of Arabidopsis thaliana (Mouse-ear cress).